Consider the following 272-residue polypeptide: MNEAYSPAAPRPMGSTSPSTMKMFMCFLSVFMVVQTIGTVLFCLYLHMKMDKMEEVLSLNEDYIFLRKVQKCQTGEDQKSTLLDCEKVLKGFQDLQCKDRTASEELPKFEMHRGHEHPHLKSRNETSVAEEKRQPIATHLAGVKSNTTVRVLKWMTTSYAPTSSLISYHEGKLKVEKAGLYYIYSQVSFCTKAAASAPFTLYIYLYLPMEEDRLLMKGLDTHSTSTALCELQSIREGGVFELRQGDMVFVNVTDSTAVNVNPGNTYFGMFKL.

Residues 1-23 (MNEAYSPAAPRPMGSTSPSTMKM) lie on the Cytoplasmic side of the membrane. The helical; Signal-anchor for type II membrane protein transmembrane segment at 24–44 (FMCFLSVFMVVQTIGTVLFCL) threads the bilayer. Over 45-272 (YLHMKMDKME…GNTYFGMFKL (228 aa)) the chain is Extracellular. N-linked (GlcNAc...) asparagine glycosylation is found at Asn124 and Asn146. Positions 136 to 272 (IATHLAGVKS…GNTYFGMFKL (137 aa)) constitute a THD domain. The cysteines at positions 190 and 229 are disulfide-linked. A glycan (N-linked (GlcNAc...) asparagine) is linked at Asn251.

It belongs to the tumor necrosis factor family. In terms of assembly, homotrimer. Interacts with CD28. CD40 ligand, soluble form: Exists as either a monomer or a homotrimer. Forms a ternary complex between CD40 and integrins for CD40-CD40LG signaling. The soluble form derives from the membrane form by proteolytic processing.

The protein localises to the cell membrane. Its subcellular location is the cell surface. It is found in the secreted. Functionally, cytokine that acts as a ligand to CD40/TNFRSF5. Costimulates T-cell proliferation and cytokine production. Induces the activation of NF-kappa-B. Mediates B-cell proliferation in the absence of co-stimulus as well as IgE production in the presence of IL4. Involved in immunoglobulin class switching. Acts as a ligand for integrins, specifically ITGA5:ITGB1 and ITGAV:ITGB3; both integrins and the CD40 receptor are required for activation of CD40-CD40LG signaling, which have cell-type dependent effects, such as B-cell activation, NF-kappa-B signaling and anti-apoptotic signaling. The protein is CD40 ligand (CD40LG) of Gallus gallus (Chicken).